Here is a 359-residue protein sequence, read N- to C-terminus: Quinolinate synthase (359 aa).

2 residues coordinate iminosuccinate: H81 and S99. C144 is a binding site for [4Fe-4S] cluster. Iminosuccinate is bound by residues 170–172 (YVN) and S187. Residue C229 participates in [4Fe-4S] cluster binding. Iminosuccinate contacts are provided by residues 255 to 257 (HPE) and T272. Residue C315 coordinates [4Fe-4S] cluster.

Belongs to the quinolinate synthase family. Type 2 subfamily. The cofactor is [4Fe-4S] cluster.

It localises to the cytoplasm. The catalysed reaction is iminosuccinate + dihydroxyacetone phosphate = quinolinate + phosphate + 2 H2O + H(+). The protein operates within cofactor biosynthesis; NAD(+) biosynthesis; quinolinate from iminoaspartate: step 1/1. Its function is as follows. Catalyzes the condensation of iminoaspartate with dihydroxyacetone phosphate to form quinolinate. The chain is Quinolinate synthase from Sinorhizobium fredii (strain NBRC 101917 / NGR234).